Reading from the N-terminus, the 271-residue chain is uncharacterized protein (271 aa).

3 consecutive transmembrane segments (helical) span residues 30 to 50 (IWFP…GMLL), 189 to 209 (ALAA…YFLI), and 218 to 238 (FLVT…IFAC).

It is found in the cell membrane. This is an uncharacterized protein from Aquifex aeolicus (strain VF5).